The chain runs to 65 residues: Large ribosomal subunit protein bL35 (65 aa).

It belongs to the bacterial ribosomal protein bL35 family.

In Buchnera aphidicola subsp. Cinara cedri (strain Cc), this protein is Large ribosomal subunit protein bL35.